Consider the following 566-residue polypeptide: Myo-inositol transporter 1A (566 aa).

The Cytoplasmic segment spans residues 1-64 (MSDEKNYGIS…ERTEKLTKFV (64 aa)). The helical transmembrane segment at 65–85 (VGLALFASVSGFCFGFDTGVI) threads the bilayer. Over 86-106 (SAALVSIKDDFGHILDDTEKE) the chain is Extracellular. Residues 107–127 (WISAATSCGALVGALSSGALA) form a helical membrane-spanning segment. Residues 128–140 (DRVGRKWTLAVGD) lie on the Cytoplasmic side of the membrane. The chain crosses the membrane as a helical span at residues 141-161 (VWFTLGAIIICSSFSVVQMIV). The Extracellular portion of the chain corresponds to 162-163 (GR). A helical membrane pass occupies residues 164–184 (AVLGLGVGTAAAIAPLYIAEV). Residues 185–192 (APTRFRGA) are Cytoplasmic-facing. Residues 193 to 213 (LVTVQSIAITGGQFFSYCIGI) form a helical membrane-spanning segment. The Extracellular segment spans residues 214–222 (PLTGHNGWR). The helical transmembrane segment at 223–243 (IQFAIGIVPAVVQAAVVHFLP) threads the bilayer. The Cytoplasmic portion of the chain corresponds to 244–313 (ESPRYDLLRG…VLTEGKYRKP (70 aa)). A helical membrane pass occupies residues 314–334 (AITALGIGIFQQLCGFNSLMY). At 335–349 (YAATIFSYAGFDNPT) the chain is on the extracellular side. A helical membrane pass occupies residues 350–370 (SVGLIVSGTNWFFTFVAMMIL). Over 371-377 (DRVGKRR) the chain is Cytoplasmic. The helical transmembrane segment at 378-398 (ILLSTYPGMIAGLALASVAFW) threads the bilayer. Residues 399 to 421 (KMTGSTGHRLVEGTEYPQQWSNM) lie on the Extracellular side of the membrane. Residues 422-442 (MLGMMVVFIAFYATGSGNITW) traverse the membrane as a helical segment. The Cytoplasmic portion of the chain corresponds to 443 to 458 (TVGEMFPLEMRGIGAS). The helical transmembrane segment at 459–479 (ILAGGVWAANIVISATFLTLM) threads the bilayer. Topologically, residues 480–485 (NAIGPT) are extracellular. A helical transmembrane segment spans residues 486–506 (PTFALYAGICLAGLIFIYFCY). Over 507 to 566 (PEPSGLSLEEIQIIYNYGFGVQKSREIRAEHKLKAQEMRDRANSHIGGSATASDDQLNKV) the chain is Cytoplasmic. The disordered stretch occupies residues 546–566 (DRANSHIGGSATASDDQLNKV). Over residues 556 to 566 (ATASDDQLNKV) the composition is skewed to polar residues.

It belongs to the major facilitator superfamily. Sugar transporter (TC 2.A.1.1) family.

It localises to the cell membrane. The catalysed reaction is myo-inositol(out) + H(+)(out) = myo-inositol(in) + H(+)(in). Major transporter for myo-inositol. Plays a role in the traversal of the host blood-brain barrier. This chain is Myo-inositol transporter 1A, found in Cryptococcus neoformans var. grubii serotype A (strain H99 / ATCC 208821 / CBS 10515 / FGSC 9487) (Filobasidiella neoformans var. grubii).